The sequence spans 128 residues: Small ribosomal subunit protein uS13 (128 aa).

The tract at residues 85-128 is disordered; the sequence is GSYRGLRHRRSLPVRGQRTHTNARTRKGPRRGTVANKKKATGKT. Over residues 89–128 the composition is skewed to basic residues; it reads GLRHRRSLPVRGQRTHTNARTRKGPRRGTVANKKKATGKT.

It belongs to the universal ribosomal protein uS13 family. As to quaternary structure, part of the 30S ribosomal subunit. Forms a loose heterodimer with protein S19. Forms two bridges to the 50S subunit in the 70S ribosome.

Its function is as follows. Located at the top of the head of the 30S subunit, it contacts several helices of the 16S rRNA. In the 70S ribosome it contacts the 23S rRNA (bridge B1a) and protein L5 of the 50S subunit (bridge B1b), connecting the 2 subunits; these bridges are implicated in subunit movement. Contacts the tRNAs in the A and P-sites. This chain is Small ribosomal subunit protein uS13, found in Solibacter usitatus (strain Ellin6076).